Reading from the N-terminus, the 296-residue chain is F-box only protein 2 (296 aa).

The disordered stretch occupies residues 1–41 (MDGDGDPESVGQPEEASPEEQPEEASAEEERPEDQQEEEAA). The segment covering 16–40 (ASPEEQPEEASAEEERPEDQQEEEA) has biased composition (acidic residues). The region spanning 44–91 (AAYLDELPEPLLLRVLAALPAAELVQACRLVCLRWKELVDGAPLWLLK) is the F-box domain. One can recognise an FBA domain in the interval 113 to 296 (FYFLSKRRRN…VTNSSVWVEP (184 aa)). Residues 210-212 (RSD) and 278-279 (YW) contribute to the a carbohydrate site.

In terms of assembly, component of the SCF(FBXO2) complex consisting of CUL1, RBX1, SKP1 and FBXO2. Predominantly detected as heterodimer with SKP1; the heterodimer with SKP1 is not part of the SCF(FBXO2) complex.

The protein localises to the cytoplasm. The protein resides in the microsome membrane. It functions in the pathway protein modification; protein ubiquitination. In terms of biological role, substrate recognition component of a SCF (SKP1-CUL1-F-box protein) E3 ubiquitin-protein ligase complex that mediates the ubiquitination and subsequent proteasomal degradation of target proteins. Involved in the endoplasmic reticulum-associated degradation pathway (ERAD) for misfolded lumenal proteins by recognizing and binding sugar chains on unfolded glycoproteins that are retrotranslocated into the cytosol and promoting their ubiquitination and subsequent degradation. Prevents formation of cytosolic aggregates of unfolded glycoproteins that have been retrotranslocated into the cytosol. Able to recognize and bind denatured glycoproteins, preferentially those of the high-mannose type. The sequence is that of F-box only protein 2 (FBXO2) from Homo sapiens (Human).